The primary structure comprises 99 residues: DNA-binding protein HU (99 aa).

The disordered stretch occupies residues 67–86 (REGRNPKTGAKMKIDAYNQP).

This sequence belongs to the bacterial histone-like protein family. As to quaternary structure, homodimer.

Functionally, histone-like DNA-binding protein which is capable of wrapping DNA to stabilize it, and thus to prevent its denaturation under extreme environmental conditions. In Rickettsia felis (strain ATCC VR-1525 / URRWXCal2) (Rickettsia azadi), this protein is DNA-binding protein HU (hup).